A 778-amino-acid polypeptide reads, in one-letter code: Beta-phellandrene synthase (neryl-diphosphate-cyclizing), chloroplastic (778 aa).

A chloroplast-targeting transit peptide spans 1–36 (MIVGYRSTIITLSHPKLGNGKTISSNAIFQRSCRVR). The Mg(2+) site is built by D531, N676, and E684. The DDXXD motif signature appears at 531-535 (DDHFE).

It belongs to the terpene synthase family. Tpse subfamily. Mg(2+) is required as a cofactor. In terms of tissue distribution, trichomes.

Its subcellular location is the plastid. The protein resides in the chloroplast. The catalysed reaction is neryl diphosphate = beta-phellandrene + diphosphate. Functionally, monoterpene synthase catalyzing the production of beta-phellandrene from neryl diphosphate. Also produces lower amounts of delta-2-carene, alpha-phellandrene and limonene. When incubated in vitro with geranyl diphosphate, catalyzes the formation of acyclic myrcene and ocimene as major products in addition to beta-phellandrene. The sequence is that of Beta-phellandrene synthase (neryl-diphosphate-cyclizing), chloroplastic (PHS1) from Solanum lycopersicum (Tomato).